The chain runs to 386 residues: Agamous-like MADS-box protein AGL103 (386 aa).

Residues 29 to 76 enclose the MADS-box domain; sequence SSSRATSLIKRQQTVFKKAKELSILCDIDVCVICYGSNGELKTWPEER.

As to quaternary structure, interacts with MEE14/CBP1.

Its subcellular location is the nucleus. Its function is as follows. Probable transcription factor that may function in the maintenance of the proper function of the central cell in pollen tube attraction. This is Agamous-like MADS-box protein AGL103 from Arabidopsis thaliana (Mouse-ear cress).